The following is a 517-amino-acid chain: 2-isopropylmalate synthase (517 aa).

The 263-residue stretch at 7 to 269 folds into the Pyruvate carboxyltransferase domain; the sequence is VIIFDTTLRD…ETGIDTTQIV (263 aa). Mn(2+) is bound by residues D16, H204, H206, and N240. The required for the condensation reaction. Not required to bind substrate stretch occupies residues 366 to 517; sequence LADKKREIFD…KPKAQGSGTI (152 aa). A regulatory domain region spans residues 395-517; that stretch reads KFISQKISTE…KPKAQGSGTI (123 aa).

The protein belongs to the alpha-IPM synthase/homocitrate synthase family. LeuA type 1 subfamily. Homodimer. Remains a homodimer in the presence of L-leucine. Requires Mn(2+) as cofactor.

It localises to the cytoplasm. It catalyses the reaction 3-methyl-2-oxobutanoate + acetyl-CoA + H2O = (2S)-2-isopropylmalate + CoA + H(+). It participates in amino-acid biosynthesis; L-leucine biosynthesis; L-leucine from 3-methyl-2-oxobutanoate: step 1/4. Inhibited by 3-bromo substituents and Leu, the pathway end product. Catalyzes the condensation of the acetyl group of acetyl-CoA with 3-methyl-2-oxobutanoate (2-ketoisovalerate) to form 3-carboxy-3-hydroxy-4-methylpentanoate (2-isopropylmalate). Complements an E.coli deletion. The polypeptide is 2-isopropylmalate synthase (Neisseria meningitidis serogroup B (strain ATCC BAA-335 / MC58)).